We begin with the raw amino-acid sequence, 284 residues long: 1D-myo-inositol 2-acetamido-2-deoxy-alpha-D-glucopyranoside deacetylase (284 aa).

Residues H12, D15, and H146 each contribute to the Zn(2+) site.

It belongs to the MshB deacetylase family. Zn(2+) is required as a cofactor.

The enzyme catalyses 1D-myo-inositol 2-acetamido-2-deoxy-alpha-D-glucopyranoside + H2O = 1D-myo-inositol 2-amino-2-deoxy-alpha-D-glucopyranoside + acetate. In terms of biological role, catalyzes the deacetylation of 1D-myo-inositol 2-acetamido-2-deoxy-alpha-D-glucopyranoside (GlcNAc-Ins) in the mycothiol biosynthesis pathway. The chain is 1D-myo-inositol 2-acetamido-2-deoxy-alpha-D-glucopyranoside deacetylase from Mycolicibacterium vanbaalenii (strain DSM 7251 / JCM 13017 / BCRC 16820 / KCTC 9966 / NRRL B-24157 / PYR-1) (Mycobacterium vanbaalenii).